Consider the following 524-residue polypeptide: Na(+)/H(+) antiporter NhaB (524 aa).

12 consecutive transmembrane segments (helical) span residues 23 to 43 (IAIL…PFYA), 44 to 64 (GWLL…CYPL), 97 to 117 (LLLI…LFVF), 120 to 140 (LLLN…AAAF), 144 to 164 (FLDA…FYGI), 203 to 223 (LLMH…VGEP), 236 to 256 (FVSF…CGIL), 304 to 324 (ALVG…VGLI), 354 to 374 (FTAL…QHLF), 392 to 412 (LFYL…VGTV), 448 to 468 (ATPN…APLI), and 476 to 496 (VWMA…CVIF).

It belongs to the NhaB Na(+)/H(+) (TC 2.A.34) antiporter family.

The protein resides in the cell inner membrane. It catalyses the reaction 2 Na(+)(in) + 3 H(+)(out) = 2 Na(+)(out) + 3 H(+)(in). Na(+)/H(+) antiporter that extrudes sodium in exchange for external protons. The chain is Na(+)/H(+) antiporter NhaB from Edwardsiella ictaluri (strain 93-146).